A 251-amino-acid polypeptide reads, in one-letter code: Ubiquinone/menaquinone biosynthesis C-methyltransferase UbiE (251 aa).

Residues T74, D95, 123–124 (NA), and S140 each bind S-adenosyl-L-methionine.

It belongs to the class I-like SAM-binding methyltransferase superfamily. MenG/UbiE family.

It catalyses the reaction a 2-demethylmenaquinol + S-adenosyl-L-methionine = a menaquinol + S-adenosyl-L-homocysteine + H(+). The enzyme catalyses a 2-methoxy-6-(all-trans-polyprenyl)benzene-1,4-diol + S-adenosyl-L-methionine = a 5-methoxy-2-methyl-3-(all-trans-polyprenyl)benzene-1,4-diol + S-adenosyl-L-homocysteine + H(+). Its pathway is quinol/quinone metabolism; menaquinone biosynthesis; menaquinol from 1,4-dihydroxy-2-naphthoate: step 2/2. The protein operates within cofactor biosynthesis; ubiquinone biosynthesis. Methyltransferase required for the conversion of demethylmenaquinol (DMKH2) to menaquinol (MKH2) and the conversion of 2-polyprenyl-6-methoxy-1,4-benzoquinol (DDMQH2) to 2-polyprenyl-3-methyl-6-methoxy-1,4-benzoquinol (DMQH2). The polypeptide is Ubiquinone/menaquinone biosynthesis C-methyltransferase UbiE (Salmonella arizonae (strain ATCC BAA-731 / CDC346-86 / RSK2980)).